The sequence spans 170 residues: Flavodoxin (170 aa).

Residues 4–165 (IGLFYGTQTG…RIKTWVSQLK (162 aa)) form the Flavodoxin-like domain.

This sequence belongs to the flavodoxin family. The cofactor is FMN.

Functionally, low-potential electron donor to a number of redox enzymes. The sequence is that of Flavodoxin (isiB) from Synechococcus elongatus (strain ATCC 33912 / PCC 7942 / FACHB-805) (Anacystis nidulans R2).